The following is a 204-amino-acid chain: Uridylate kinase (204 aa).

26 to 31 (GAGKGT) serves as a coordination point for ATP. The interval 46 to 76 (SAGDLLRAEQGRAGSQYGELIKNCIKEGQIV) is NMP. Residues R52, 74–76 (QIV), 104–107 (GFPR), and Q111 each bind a ribonucleoside 5'-phosphate. The LID stretch occupies residues 141 to 151 (ERGKTSGRSDD). R142 lines the ATP pocket. A ribonucleoside 5'-phosphate-binding residues include R148 and R159. R187 is a binding site for ATP.

It belongs to the adenylate kinase family. UMP-CMP kinase subfamily. Monomer. Mg(2+) is required as a cofactor.

It localises to the cytoplasm. The protein localises to the nucleus. The catalysed reaction is UMP + ATP = UDP + ADP. Catalyzes the phosphorylation of pyrimidine nucleoside monophosphates at the expense of ATP. Plays an important role in de novo pyrimidine nucleotide biosynthesis. Has preference for UMP and dUMP as phosphate acceptors, but can also use CMP, dCMP, AMP, GMP, dGMP and dTMP. ATP and dATP are the best phosphate donors, but can also use GTP, dGTP, dCTP, and dTTP to some degree. The protein is Uridylate kinase of Saccharomyces cerevisiae (strain ATCC 204508 / S288c) (Baker's yeast).